Consider the following 592-residue polypeptide: Inactive metallocarboxypeptidase ECM14 (592 aa).

A signal peptide spans 1-21 (MRQFTHGTLLAILALANTISA). A propeptide spanning residues 22–174 (IPSFSANNYP…QTVYESYPSS (153 aa)) is cleaved from the precursor. Over residues 170–179 (SYPSSSQRPT) the composition is skewed to polar residues. Residues 170–191 (SYPSSSQRPTDNGRGFLPSRES) are disordered. In terms of domain architecture, Peptidase M14 spans 202–521 (DYQPLSVIGP…NAVMVLGKFL (320 aa)). Zn(2+)-binding residues include His-264 and Glu-267. Residues 264 to 267 (HARE), Arg-322, and 339 to 340 (DR) each bind substrate. Cysteines 333 and 356 form a disulfide. Residue Asn-349 is glycosylated (N-linked (GlcNAc...) asparagine). His-396 serves as a coordination point for Zn(2+). Substrate is bound at residue 397–398 (SY). The interval 542–592 (ADKPILDDGDDDEEEDGQDKNDDSWIPDEYKNDNDHDDDDDGWGLRRRRKR) is disordered. Residues 548-558 (DDGDDDEEEDG) are compositionally biased toward acidic residues. Residues 559–575 (QDKNDDSWIPDEYKNDN) show a composition bias toward basic and acidic residues.

This sequence belongs to the peptidase M14 family. Zn(2+) is required as a cofactor.

The protein localises to the vacuole. It localises to the secreted. In terms of biological role, inactive carboxypeptidase that may play a role in cell wall organization and biogenesis. This is Inactive metallocarboxypeptidase ECM14 (ECM14) from Blastomyces gilchristii (strain SLH14081) (Blastomyces dermatitidis).